A 336-amino-acid chain; its full sequence is Casein kinase I isoform beta (336 aa).

Residues Tyr-17–Phe-285 form the Protein kinase domain. ATP is bound by residues Ile-23–Val-31 and Lys-46. The Proton acceptor role is filled by Asp-136. Residues Ala-309–Gln-320 are compositionally biased toward low complexity. The tract at residues Ala-309–Ser-336 is disordered. A compositionally biased stretch (basic and acidic residues) spans Asp-327–Ser-336.

It belongs to the protein kinase superfamily. CK1 Ser/Thr protein kinase family. Casein kinase I subfamily. In terms of assembly, monomer.

The protein localises to the cytoplasm. The catalysed reaction is L-seryl-[protein] + ATP = O-phospho-L-seryl-[protein] + ADP + H(+). The enzyme catalyses L-threonyl-[protein] + ATP = O-phospho-L-threonyl-[protein] + ADP + H(+). Casein kinases are operationally defined by their preferential utilization of acidic proteins such as caseins as substrates. It can phosphorylate a large number of proteins. Participates in Wnt signaling. This Bos taurus (Bovine) protein is Casein kinase I isoform beta (CSNK1B).